Reading from the N-terminus, the 322-residue chain is MAKALHITIFLFLISSNLLAFINSARLLDEIQPQPQLVPTGQIPTVAPTEAEEEDGTDDNPGLATTTTTASAVTVPAGPAEATEPLLEFFMHDVLGGSHPSARVVTGIVAQTEVNGIPFSKASNSIFPVDNGVPLVNSNNINSVINPNTAPLLTGLGGAQTSTVIQNTNGNSNDALSANSLPFVTAGNLPPGAALQHLMFGTITVVDDELTESHELGSAVIGRAQGFYLASSLDGTSQTLSLTVLLHGEHDQHDTLDDAISFFGVHRTASHASQIAVIGGTGKFEHAKGYAIVETLHNQDNQHITDGQDTILHFSVYLTYKA.

The signal sequence occupies residues 1–20 (MAKALHITIFLFLISSNLLA).

Belongs to the plant dirigent protein family. In terms of assembly, homodimer.

The protein resides in the secreted. It is found in the extracellular space. Its subcellular location is the apoplast. In terms of biological role, dirigent proteins impart stereoselectivity on the phenoxy radical-coupling reaction, yielding optically active lignans from two molecules of coniferyl alcohol in the biosynthesis of lignans, flavonolignans, and alkaloids and thus plays a central role in plant secondary metabolism. This Arabidopsis thaliana (Mouse-ear cress) protein is Dirigent protein 9 (DIR9).